A 76-amino-acid chain; its full sequence is U14-hexatoxin-Hi1a (76 aa).

A signal peptide spans 1 to 18 (MMQLAVLICLSLVVNTFA). 3 disulfide bridges follow: C21–C34, C27–C39, and C33–C61.

Expressed by the venom gland.

The protein localises to the secreted. Functionally, probable ion channel inhibitor. This chain is U14-hexatoxin-Hi1a, found in Hadronyche infensa (Fraser island funnel-web spider).